Here is a 156-residue protein sequence, read N- to C-terminus: Transcription elongation factor GreA (156 aa).

Residues 2–27 (EKTFPMTKEGLDKLKAELENLKLVKR) are a coiled coil.

This sequence belongs to the GreA/GreB family.

Necessary for efficient RNA polymerase transcription elongation past template-encoded arresting sites. The arresting sites in DNA have the property of trapping a certain fraction of elongating RNA polymerases that pass through, resulting in locked ternary complexes. Cleavage of the nascent transcript by cleavage factors such as GreA or GreB allows the resumption of elongation from the new 3'terminus. GreA releases sequences of 2 to 3 nucleotides. The sequence is that of Transcription elongation factor GreA from Lactococcus lactis subsp. cremoris (strain SK11).